Consider the following 360-residue polypeptide: MVPPTAVNDAPAAGSAVSVKDPAKDTILTPRFYTTDFEAMAAMDLRPNEAELEAICEEFRKDYNRHHFVRNDEFEGAADKLDPETRRVFVEFLEQSCTSEFSGFLLYKELSRRIKTRNPLLAECFAHMARDEARHAGFLNKSMSDFGLQLDLGFLTANKSYTFFQPKFIFYATYLSEKIGYWRYITIFRHLEKNPDSKIFPIFNFFENWCQDENRHGDFFDALMKAQPNTVRGFRARLWCRFFLLAVFATMYVRDVARKEFYEALGLDARDYDRLVIDKTNETTARVFPVVLDVKNPKFYAGLENLVTNNAALDAVDASASSAPIKVLRKLPHWIANGAQMASLFLMAPVRSESFQPSVR.

It belongs to the AcsF family. Fe cation is required as a cofactor.

The catalysed reaction is Mg-protoporphyrin IX 13-monomethyl ester + 3 NADPH + 3 O2 + 2 H(+) = 3,8-divinyl protochlorophyllide a + 3 NADP(+) + 5 H2O. The protein operates within porphyrin-containing compound metabolism; chlorophyll biosynthesis (light-independent). Its function is as follows. Catalyzes the formation of the isocyclic ring in chlorophyll biosynthesis. Mediates the cyclase reaction, which results in the formation of divinylprotochlorophyllide (Pchlide) characteristic of all chlorophylls from magnesium-protoporphyrin IX 13-monomethyl ester (MgPMME). The polypeptide is Magnesium-protoporphyrin IX monomethyl ester [oxidative] cyclase (Synechococcus sp. (strain WH7803)).